The following is a 391-amino-acid chain: Autophagy-related protein 18d (391 aa).

The interval 1–24 is disordered; sequence MDPRRNFQPGGYDSRNTFTSGSFG. WD repeat units lie at residues 31–69, 74–118, 203–243, and 248–287; these read SDEA…ETFR, DGGF…CISE, AHDS…RLQE, and VDRA…IGED.

This sequence belongs to the WD repeat PROPPIN family. As to quaternary structure, component of the PI(3,5)P2 regulatory complex at least composed of ATG18, SAC/FIG4, FAB1 and VAC14. As to expression, expressed in roots, stems, flowers and leaves.

Its subcellular location is the preautophagosomal structure membrane. It is found in the vacuole membrane. Functionally, the PI(3,5)P2 regulatory complex regulates both the synthesis and turnover of phosphatidylinositol 3,5-bisphosphate (PtdIns(3,5)P2). Required for autophagy. The polypeptide is Autophagy-related protein 18d (ATG18D) (Arabidopsis thaliana (Mouse-ear cress)).